A 605-amino-acid chain; its full sequence is uncharacterized protein (605 aa).

2 disordered regions span residues 10 to 78 and 216 to 248; these read RRGG…FPPA and RAPD…VRNP. The segment covering 20 to 48 has biased composition (low complexity); sequence AGGRPAAGGRPAAGGRPAAGSRAAAGAAG. Residues 220–233 are compositionally biased toward pro residues; it reads CPSPRTPMVKPPFR.

This is an uncharacterized protein from Dryophytes versicolor (chameleon treefrog).